Reading from the N-terminus, the 101-residue chain is uncharacterized protein (101 aa).

A helical membrane pass occupies residues 17–37 (VIKILLISGISRIIILILAMF).

Its subcellular location is the endoplasmic reticulum membrane. This is an uncharacterized protein from Schizosaccharomyces pombe (strain 972 / ATCC 24843) (Fission yeast).